The chain runs to 524 residues: Unconventional prefoldin RPB5 interactor (524 aa).

3 disordered regions span residues 1-20, 284-320, and 335-373; these read MEAP…LRAP, SVNG…EDNS, and VRIN…ELPM. Residues 296-307 are compositionally biased toward acidic residues; it reads DDGDNNDDGGDS. Ser361 is subject to Phosphoserine; by RPS6KB1. Ser431 is subject to Phosphoserine.

It belongs to the RNA polymerase II subunit 5-mediating protein family. Homodimer. Component of the PAQosome complex which is responsible for the biogenesis of several protein complexes and which consists of R2TP complex members RUVBL1, RUVBL2, RPAP3 and PIH1D1, URI complex members PFDN2, PFDN6, PDRG1, UXT and URI1 as well as ASDURF, POLR2E and DNAAF10/WDR92. Interacts with POLR2E/RPB5, RUVBL2 and RUVBL1. Interacts with PFDN2, PFDN4 and STAP1; the interactions are phosphorylation-dependent and occur in a growth-dependent manner in the mitochondrion. Interacts with UXT. Interacts with PPP1CC; the interaction is phosphorylation-dependent and occurs in a growth factor-dependent manner. Interacts (via the middle C-terminal region) with GTF2F1 and GTF2F2. Interacts with DMAP1. Interacts with TSC1 and TSC2. Interacts with PRPF8 and EFTUD2 in a ZNHIT2-dependent manner. In terms of processing, phosphorylated. Phosphorylation occurs essentially on serine residues. Phosphorylation occurs in response to androgen treatment in prostate cancer cells in a mTOR-dependent manner. Phosphorylated; hyperhosphorylated in mitochondria in a mTORC-dependent signaling pathway. Phosphorylated at Ser-361 by RPS6KB1 in a growth factor- and rapamycin-dependent manner. S6K1-mediated mitochondrial phosphorylation at Ser-361 disrupts the URI1-PPP1CC complex in the mitochondrion, relieves PPP1CC phosphatase inhibition activity and hence engages a negative feedback diminishing RPS6KB1 kinase activity, preventing sustained S6K1-dependent signaling.

It localises to the nucleus. The protein localises to the cytoplasm. Its subcellular location is the mitochondrion. The protein resides in the cell projection. It is found in the dendrite. In terms of biological role, involved in gene transcription regulation. Acts as a transcriptional repressor in concert with the corepressor UXT to regulate androgen receptor (AR) transcription. May act as a tumor suppressor to repress AR-mediated gene transcription and to inhibit anchorage-independent growth in prostate cancer cells. Required for cell survival in ovarian cancer cells. Together with UXT, associates with chromatin to the NKX3-1 promoter region. Functionally, plays a central role in maintaining S6K1 signaling and BAD phosphorylation under normal growth conditions thereby protecting cells from potential deleterious effects of sustained S6K1 signaling. The URI1-PPP1CC complex acts as a central component of a negative feedback mechanism that counteracts excessive S6K1 survival signaling to BAD in response to growth factors. Mediates inhibition of PPP1CC phosphatase activity in mitochondria. Coordinates the regulation of nutrient-sensitive gene expression availability in a mTOR-dependent manner. Seems to be a scaffolding protein able to assemble a prefoldin-like complex that contains PFDs and proteins with roles in transcription and ubiquitination. The chain is Unconventional prefoldin RPB5 interactor (URI1) from Bos taurus (Bovine).